The sequence spans 104 residues: MFASTVFVSLLAVAAAVPTNPQGQSCGNGNTVHCCNAETANKLTKGGILGALDLSNLLGQCNDVTAAVAGGAVPIKNTCSSQAVCCGEIHQNGLVNLGCTPIFV.

Positions 1 to 16 (MFASTVFVSLLAVAAA) are cleaved as a signal peptide. 4 disulfide bridges follow: Cys26-Cys85, Cys34-Cys79, Cys35-Cys61, and Cys86-Cys99.

Belongs to the fungal hydrophobin family. As to quaternary structure, self-assembles to form functional amyloid fibrils called rodlets. Self-assembly into fibrillar rodlets occurs spontaneously at hydrophobic:hydrophilic interfaces and the rodlets further associate laterally to form amphipathic monolayers.

The protein resides in the secreted. The protein localises to the cell wall. Aerial growth, conidiation, and dispersal of filamentous fungi in the environment rely upon a capability of their secreting small amphipathic proteins called hydrophobins (HPBs) with low sequence identity. Class I can self-assemble into an outermost layer of rodlet bundles on aerial cell surfaces, conferring cellular hydrophobicity that supports fungal growth, development and dispersal; whereas Class II form highly ordered films at water-air interfaces through intermolecular interactions but contribute nothing to the rodlet structure. HYD4 is a class I hydrophobin that negatively regulates aerial mycelial growth, conidiation, carotenoid and adenosine synthesis, resistance to oxidant stress, and fruiting body development. Seems not to be involved in the mycelial growth rate, the hydrophobicity of the mycelia and conidia, nor the conidial virulence on silkworm pupae. In Cordyceps militaris (Caterpillar fungus), this protein is Class I hydrophobin 4.